A 451-amino-acid chain; its full sequence is Chromosomal replication initiator protein DnaA (451 aa).

A domain I, interacts with DnaA modulators region spans residues 1–72 (MQSIEDIWQE…ANILQEITGR (72 aa)). Residues 72–108 (RLFDVRFIDGEQEENFEYTVIKPNPALDEDGVEIGKH) form a domain II region. The domain III, AAA+ region stretch occupies residues 109-325 (MLNPRYVFDT…GALIRVVAYS (217 aa)). Residues G153, G155, K156, and T157 each coordinate ATP. The interval 326–451 (SLVNKDITAG…KNLRKAQNMF (126 aa)) is domain IV, binds dsDNA.

The protein belongs to the DnaA family. In terms of assembly, oligomerizes as a right-handed, spiral filament on DNA at oriC.

It is found in the cytoplasm. Plays an essential role in the initiation and regulation of chromosomal replication. ATP-DnaA binds to the origin of replication (oriC) to initiate formation of the DNA replication initiation complex once per cell cycle. Binds the DnaA box (a 9 base pair repeat at the origin) and separates the double-stranded (ds)DNA. Forms a right-handed helical filament on oriC DNA; dsDNA binds to the exterior of the filament while single-stranded (ss)DNA is stabiized in the filament's interior. The ATP-DnaA-oriC complex binds and stabilizes one strand of the AT-rich DNA unwinding element (DUE), permitting loading of DNA polymerase. After initiation quickly degrades to an ADP-DnaA complex that is not apt for DNA replication. Binds acidic phospholipids. This chain is Chromosomal replication initiator protein DnaA, found in Listeria monocytogenes serotype 4b (strain CLIP80459).